Reading from the N-terminus, the 376-residue chain is DNA replication and repair protein RecF (376 aa).

35 to 42 (GDNGSGKT) is an ATP binding site.

It belongs to the RecF family.

It is found in the cytoplasm. Its function is as follows. The RecF protein is involved in DNA metabolism; it is required for DNA replication and normal SOS inducibility. RecF binds preferentially to single-stranded, linear DNA. It also seems to bind ATP. The chain is DNA replication and repair protein RecF from Agrobacterium fabrum (strain C58 / ATCC 33970) (Agrobacterium tumefaciens (strain C58)).